The following is an 823-amino-acid chain: DNA mismatch repair protein MutS (823 aa).

ATP is bound at residue Gly-605–Ser-612.

Belongs to the DNA mismatch repair MutS family.

This protein is involved in the repair of mismatches in DNA. It is possible that it carries out the mismatch recognition step. This protein has a weak ATPase activity. The protein is DNA mismatch repair protein MutS of Fervidobacterium nodosum (strain ATCC 35602 / DSM 5306 / Rt17-B1).